An 876-amino-acid chain; its full sequence is Importin subunit beta-1 (876 aa).

Met1 carries the post-translational modification N-acetylmethionine. 5 HEAT repeats span residues 3-29, 32-62, 85-120, 129-160, and 170-201; these read LITILEKTVSPDRLELEAAQKFLERAA, NLPTFLVELSRVLANPGNSQVARVAAGLQIK, ANARREVKNYVLQTLGTETYRPSSASQCVAGIACAE, LIPQLVANVTNPNSTEHMKESTLEAIGYICQD, and SNEILTAIIQGMRKEEPSNNVKLAATNALLNS. Ser12 is subject to Phosphoserine. Residues 21–101 enclose the Importin N-terminal domain; the sequence is AQKFLERAAV…KNYVLQTLGT (81 aa). Lys211 carries the N6-acetyllysine modification. HEAT repeat units lie at residues 212 to 247, 260 to 302, 314 to 359, 363 to 392, 399 to 438, 449 to 485, 500 to 537, 544 to 592, 597 to 639, 644 to 680, 686 to 724, 729 to 777, 785 to 828, and 834 to 875; these read ESERHFIMQVVCEATQCPDTRVRVAALQNLVKIMSL, LFAI…EAAE, YAKG…STCC, IVPHVLPFIKEHIKNPDWRYRDAAVMAFGS, PNQLKPLVIQAMPTLIELMKDPSVVVRDTTAWTVGRICEL, LAPLLQCLIEGLSAEPRVASNVCWAFSSLAEAAYEAA, SSSFELIVQKLLETTDRPDGHQNNLRSSAYESLMEIVK, YPAV…QNVL, HQDA…VEVL, LKYMEAFKPFLGIGLKNYAEYQVCLAAVGLVGDLCRA, LPFCDEVMQLLLENLGNENVHRSVKPQILSVFGDIALAI, KKYL…QGLK, PDVM…LCTA, and LKLV…LKNQ. The tract at residues 286 to 462 is essential for high affinity interaction with RPL23A; it reads VCDEEMDLAI…LQCLIEGLSA (177 aa). Positions 329–342 are IAB-binding; it reads TLTKQDENDDDDDW. Residues 334-419 are ran-GTP binding; sequence DENDDDDDWN…MPTLIELMKD (86 aa). Lys835 and Lys867 each carry N6-acetyllysine.

This sequence belongs to the importin beta family. Importin beta-1 subfamily. In terms of assembly, forms a complex with an importin alpha subunit. Interacts with XPO1. Forms a heterodimer with IPO7. The KPNB1/IPO7 heterodimer interacts with H1 histone. Interacts with SNUPN. Interacts with H2A, H2B, H3 and H4 histones. Component of an import snRNP complex composed of KPNB1, SNUPN, SMN1 and ZNF259. Component of a nuclear export receptor complex composed of KPNB1, Ran, SNUPN and XPO1. Interacts with SRY. Interacts with PRKCI/atypical protein kinase C iota. Interacts with KPNA2. Interacts with KPNA7. Interacts with SNAI1 (via zinc fingers) and SNAI2 (via zinc fingers). Interacts with SLC35G1 and STIM1. Interacts with DCAF8. Interacts with RAN. Interacts with NUMA1 (via C-terminus); this interaction is inhibited by RanGTP. Interacts with ZBED1/hDREF; required for nuclear import of ZBED1/hDREF. Interacts with SRP19. Interacts with RPL23A (via BIB domain), RPS7 and RPL5. In terms of processing, mono-ADP-ribosylated by PARP16.

The protein localises to the cytoplasm. Its subcellular location is the nucleus envelope. In terms of biological role, functions in nuclear protein import, either in association with an adapter protein, like an importin-alpha subunit, which binds to nuclear localization signals (NLS) in cargo substrates, or by acting as autonomous nuclear transport receptor. Acting autonomously, serves itself as NLS receptor. Docking of the importin/substrate complex to the nuclear pore complex (NPC) is mediated by KPNB1 through binding to nucleoporin FxFG repeats and the complex is subsequently translocated through the pore by an energy requiring, Ran-dependent mechanism. At the nucleoplasmic side of the NPC, Ran binds to importin-beta and the three components separate and importin-alpha and -beta are re-exported from the nucleus to the cytoplasm where GTP hydrolysis releases Ran from importin. The directionality of nuclear import is thought to be conferred by an asymmetric distribution of the GTP- and GDP-bound forms of Ran between the cytoplasm and nucleus. Mediates autonomously the nuclear import of ribosomal proteins RPL23A, RPS7 and RPL5. In association with IPO7, mediates the nuclear import of H1 histone. In vitro, mediates nuclear import of H2A, H2B, H3 and H4 histones. Imports MRTFA, SNAI1 and PRKCI into the nucleus. The polypeptide is Importin subunit beta-1 (Kpnb1) (Mus musculus (Mouse)).